Here is a 357-residue protein sequence, read N- to C-terminus: Arginine kinase (357 aa).

The 83-residue stretch at Lys9–Gly91 folds into the Phosphagen kinase N-terminal domain. Gly64–Tyr68 is a binding site for substrate. A Phosphagen kinase C-terminal domain is found at Phe119 to Ala356. ATP contacts are provided by residues Ser122–Arg126 and His185. A substrate-binding site is contributed by Glu225. Residue Arg229 participates in ATP binding. Cys271 serves as a coordination point for substrate. ATP-binding positions include Arg280–His284 and Arg309–Glu314. Glu314 is a binding site for substrate.

Belongs to the ATP:guanido phosphotransferase family. As to quaternary structure, monomer.

Its subcellular location is the cytoplasm. The enzyme catalyses L-arginine + ATP = N(omega)-phospho-L-arginine + ADP + H(+). Catalyzes the reversible transfer of the terminal phosphoryl group of ATP to L-arginine. This chain is Arginine kinase, found in Limulus polyphemus (Atlantic horseshoe crab).